The primary structure comprises 158 residues: RNA pyrophosphohydrolase (158 aa).

The region spanning 8–152 (PYRPCAGVML…KRALYRGLIE (145 aa)) is the Nudix hydrolase domain. The short motif at 42-63 (GGIDEGEDAEKAAIRELGEETG) is the Nudix box element.

It belongs to the Nudix hydrolase family. RppH subfamily. A divalent metal cation is required as a cofactor.

Accelerates the degradation of transcripts by removing pyrophosphate from the 5'-end of triphosphorylated RNA, leading to a more labile monophosphorylated state that can stimulate subsequent ribonuclease cleavage. The sequence is that of RNA pyrophosphohydrolase from Sphingopyxis alaskensis (strain DSM 13593 / LMG 18877 / RB2256) (Sphingomonas alaskensis).